We begin with the raw amino-acid sequence, 612 residues long: Dihydroxy-acid dehydratase (612 aa).

Mg(2+) is bound at residue aspartate 81. Cysteine 122 provides a ligand contact to [2Fe-2S] cluster. Mg(2+) contacts are provided by aspartate 123 and lysine 124. Lysine 124 is subject to N6-carboxylysine. Cysteine 193 contacts [2Fe-2S] cluster. Position 489 (glutamate 489) interacts with Mg(2+). Serine 515 functions as the Proton acceptor in the catalytic mechanism.

This sequence belongs to the IlvD/Edd family. In terms of assembly, homodimer. [2Fe-2S] cluster is required as a cofactor. Mg(2+) serves as cofactor.

The enzyme catalyses (2R)-2,3-dihydroxy-3-methylbutanoate = 3-methyl-2-oxobutanoate + H2O. It catalyses the reaction (2R,3R)-2,3-dihydroxy-3-methylpentanoate = (S)-3-methyl-2-oxopentanoate + H2O. The protein operates within amino-acid biosynthesis; L-isoleucine biosynthesis; L-isoleucine from 2-oxobutanoate: step 3/4. Its pathway is amino-acid biosynthesis; L-valine biosynthesis; L-valine from pyruvate: step 3/4. Functions in the biosynthesis of branched-chain amino acids. Catalyzes the dehydration of (2R,3R)-2,3-dihydroxy-3-methylpentanoate (2,3-dihydroxy-3-methylvalerate) into 2-oxo-3-methylpentanoate (2-oxo-3-methylvalerate) and of (2R)-2,3-dihydroxy-3-methylbutanoate (2,3-dihydroxyisovalerate) into 2-oxo-3-methylbutanoate (2-oxoisovalerate), the penultimate precursor to L-isoleucine and L-valine, respectively. This Pseudomonas aeruginosa (strain LESB58) protein is Dihydroxy-acid dehydratase.